The chain runs to 356 residues: uncharacterized protein (356 aa).

This is an uncharacterized protein from Bacillus subtilis (strain 168).